The following is a 1091-amino-acid chain: Leucine--tRNA ligase, cytoplasmic (1091 aa).

The 'HIGH' region signature appears at 53–63 (PYMNGYLHIGH). The short motif at 715–719 (KMSKS) is the 'KMSKS' region element. Position 718 (K718) interacts with ATP.

This sequence belongs to the class-I aminoacyl-tRNA synthetase family.

Its subcellular location is the cytoplasm. The protein resides in the cytosol. It carries out the reaction tRNA(Leu) + L-leucine + ATP = L-leucyl-tRNA(Leu) + AMP + diphosphate. Functionally, catalyzes the specific attachment of an amino acid to its cognate tRNA in a two step reaction: the amino acid (AA) is first activated by ATP to form AA-AMP and then transferred to the acceptor end of the tRNA. This chain is Leucine--tRNA ligase, cytoplasmic, found in Arabidopsis thaliana (Mouse-ear cress).